A 331-amino-acid chain; its full sequence is UDP-N-acetylenolpyruvoylglucosamine reductase (331 aa).

Residues 54–221 form the FAD-binding PCMH-type domain; the sequence is RVGGAAELYV…TQATFQLQPG (168 aa). The active site involves arginine 200. The Proton donor role is filled by serine 251. The active site involves glutamate 321.

Belongs to the MurB family. Requires FAD as cofactor.

It localises to the cytoplasm. The enzyme catalyses UDP-N-acetyl-alpha-D-muramate + NADP(+) = UDP-N-acetyl-3-O-(1-carboxyvinyl)-alpha-D-glucosamine + NADPH + H(+). Its pathway is cell wall biogenesis; peptidoglycan biosynthesis. Cell wall formation. This Trichormus variabilis (strain ATCC 29413 / PCC 7937) (Anabaena variabilis) protein is UDP-N-acetylenolpyruvoylglucosamine reductase.